Reading from the N-terminus, the 534-residue chain is Probable alkaline/neutral invertase D (534 aa).

Phosphoserine occurs at positions 7 and 37. A Phosphothreonine modification is found at Thr-55. Ser-532 carries the post-translational modification Phosphoserine.

Belongs to the glycosyl hydrolase 100 family.

The catalysed reaction is Hydrolysis of terminal non-reducing beta-D-fructofuranoside residues in beta-D-fructofuranosides.. In terms of biological role, invertase that cleaves sucrose into glucose and fructose. This Arabidopsis thaliana (Mouse-ear cress) protein is Probable alkaline/neutral invertase D.